Reading from the N-terminus, the 263-residue chain is Endonuclease 8 (263 aa).

Pro2 acts as the Schiff-base intermediate with DNA in catalysis. Residue Glu3 is the Proton donor of the active site. The Proton donor; for beta-elimination activity role is filled by Lys53. The DNA site is built by Gln70, Arg125, and Asn169. Residues 229–263 (KVFHRDGELCERCGGIIEKTTLSSRPFYWCPGCQH) form an FPG-type zinc finger. Arg253 acts as the Proton donor; for delta-elimination activity in catalysis.

The protein belongs to the FPG family. Zn(2+) serves as cofactor.

The catalysed reaction is 2'-deoxyribonucleotide-(2'-deoxyribose 5'-phosphate)-2'-deoxyribonucleotide-DNA = a 3'-end 2'-deoxyribonucleotide-(2,3-dehydro-2,3-deoxyribose 5'-phosphate)-DNA + a 5'-end 5'-phospho-2'-deoxyribonucleoside-DNA + H(+). Its function is as follows. Involved in base excision repair of DNA damaged by oxidation or by mutagenic agents. Acts as a DNA glycosylase that recognizes and removes damaged bases. Has a preference for oxidized pyrimidines, such as thymine glycol, 5,6-dihydrouracil and 5,6-dihydrothymine. Has AP (apurinic/apyrimidinic) lyase activity and introduces nicks in the DNA strand. Cleaves the DNA backbone by beta-delta elimination to generate a single-strand break at the site of the removed base with both 3'- and 5'-phosphates. In Shigella flexneri serotype 5b (strain 8401), this protein is Endonuclease 8.